The primary structure comprises 576 residues: Proline--tRNA ligase (576 aa).

This sequence belongs to the class-II aminoacyl-tRNA synthetase family. ProS type 1 subfamily. Homodimer.

The protein resides in the cytoplasm. The enzyme catalyses tRNA(Pro) + L-proline + ATP = L-prolyl-tRNA(Pro) + AMP + diphosphate. In terms of biological role, catalyzes the attachment of proline to tRNA(Pro) in a two-step reaction: proline is first activated by ATP to form Pro-AMP and then transferred to the acceptor end of tRNA(Pro). As ProRS can inadvertently accommodate and process non-cognate amino acids such as alanine and cysteine, to avoid such errors it has two additional distinct editing activities against alanine. One activity is designated as 'pretransfer' editing and involves the tRNA(Pro)-independent hydrolysis of activated Ala-AMP. The other activity is designated 'posttransfer' editing and involves deacylation of mischarged Ala-tRNA(Pro). The misacylated Cys-tRNA(Pro) is not edited by ProRS. This chain is Proline--tRNA ligase, found in Pelobacter propionicus (strain DSM 2379 / NBRC 103807 / OttBd1).